Here is a 143-residue protein sequence, read N- to C-terminus: Small ribosomal subunit protein bS6 (143 aa).

The disordered stretch occupies residues Q100–A143. Over residues K105 to D121 the composition is skewed to basic and acidic residues. Residues D126–A143 are compositionally biased toward low complexity.

Belongs to the bacterial ribosomal protein bS6 family.

Its function is as follows. Binds together with bS18 to 16S ribosomal RNA. The protein is Small ribosomal subunit protein bS6 of Xylella fastidiosa (strain M12).